The primary structure comprises 146 residues: VHLTAEEKSLVTGLWGKVNVDEVGGEALGRLLIVYPWTQRFFDSFGDLSTPDAVMGNAKVKAHGKKVLNSFSDGLKNLDNLKGTFAKLSELHCDKLHVDPENFKLLGNVLVCVLAHHFGKEFTPQVQAAYQKVVAGVANALAHKYH.

At Val-1 the chain carries N-acetylvaline. A Globin domain is found at 2–146; it reads HLTAEEKSLV…VANALAHKYH (145 aa). Thr-12 is modified (phosphothreonine). Ser-44 bears the Phosphoserine mark. At Lys-59 the chain carries N6-acetyllysine. His-63 contributes to the heme b binding site. Lys-82 carries the post-translational modification N6-acetyllysine. Residue His-92 participates in heme b binding. Cys-93 is subject to S-nitrosocysteine. At Lys-144 the chain carries N6-acetyllysine.

This sequence belongs to the globin family. As to quaternary structure, heterotetramer of two alpha chains and two beta chains. In terms of tissue distribution, red blood cells.

Functionally, involved in oxygen transport from the lung to the various peripheral tissues. The sequence is that of Hemoglobin subunit beta (HBB) from Vulpes vulpes (Red fox).